A 126-amino-acid chain; its full sequence is Iron-sulfur cluster insertion protein ErpA (126 aa).

The interval 1-21 (MNQPANQFNPSSSQPVDPTVL) is disordered. Cysteine 54, cysteine 118, and cysteine 120 together coordinate iron-sulfur cluster.

The protein belongs to the HesB/IscA family. Homodimer. Iron-sulfur cluster serves as cofactor.

In terms of biological role, required for insertion of 4Fe-4S clusters for at least IspG. This is Iron-sulfur cluster insertion protein ErpA from Psychrobacter arcticus (strain DSM 17307 / VKM B-2377 / 273-4).